The chain runs to 858 residues: Heat shock protein 105 kDa (858 aa).

Residue serine 2 is modified to N-acetylserine. The residue at position 471 (lysine 471) is an N6-acetyllysine. Disordered regions lie at residues 500-585 and 801-858; these read KVPT…PPEA and VTQP…MDLD. The span at 504 to 515 shows a compositional bias: acidic residues; sequence EEEDGSSLEADM. Phosphoserine occurs at positions 509 and 510. The segment covering 533-549 has biased composition (polar residues); sequence QQDNSEAGTQPQVQTDG. Serine 558 carries the phosphoserine modification. Threonine 562 carries the post-translational modification Phosphothreonine. Composition is skewed to basic and acidic residues over residues 564–585 and 806–815; these read EESK…PPEA and PKIESPKLER. The residue at position 810 (serine 810) is a Phosphoserine. Threonine 816 bears the Phosphothreonine mark.

This sequence belongs to the heat shock protein 70 family. Interacts with HSPA8/HSC70. Interacts with HSPA1A (via NBD) and HSPA1B (via NBD). Post-translationally, phosphorylation on Ser-509 may be important for regulation of the HSPA8/HSC70 chaperone activity. As to expression, expressed in neurons in the cerebrum and Purkinje cells in the cerebellum (at protein level). Expressed in testis and no expression or only low-level expression in liver, spleen, lung, and kidney (at protein level). Highly expressed in the brain and moderately expressed in lung, heart, thymus, spleen, liver, and small intestine.

The protein resides in the cytoplasm. The protein localises to the nucleus. Acts as a nucleotide-exchange factor (NEF) for chaperone proteins HSPA1A and HSPA1B, promoting the release of ADP from HSPA1A/B thereby triggering client/substrate protein release. Prevents the aggregation of denatured proteins in cells under severe stress, on which the ATP levels decrease markedly. Inhibits HSPA8/HSC70 ATPase and chaperone activities. The chain is Heat shock protein 105 kDa (Hsph1) from Mus musculus (Mouse).